A 204-amino-acid polypeptide reads, in one-letter code: Protein C (204 aa).

The tract at residues 1–78 (MPSFLRGILK…TEQSQRRPKI (78 aa)) is disordered. Basic and acidic residues predominate over residues 10–20 (KPKERHHENKN). Residues 25–34 (SSDSLTSSYP) are compositionally biased toward low complexity.

This sequence belongs to the respirovirus protein C family.

The sequence is that of Protein C (P/V/C) from Homo sapiens (Human).